An 861-amino-acid polypeptide reads, in one-letter code: Xylan 1,4-beta-xylosidase (861 aa).

The first 19 residues, 1 to 19 (MKYQLFLSLALCVGLGASA), serve as a signal peptide directing secretion. Aspartate 269 acts as the Nucleophile in catalysis. The PA14 domain maps to 458–600 (DGKKGLKGTF…DYQETIAQLK (143 aa)). Glutamate 616 (proton donor/acceptor) is an active-site residue.

This sequence belongs to the glycosyl hydrolase 3 family. In terms of assembly, exists as a large polymeric species, presumably as a homononamer.

The catalysed reaction is Hydrolysis of (1-&gt;4)-beta-D-xylans, to remove successive D-xylose residues from the non-reducing termini.. It carries out the reaction Hydrolysis of terminal non-reducing alpha-L-arabinofuranoside residues in alpha-L-arabinosides.. It participates in glycan degradation; xylan degradation. Its function is as follows. Involved in degradation of plant cell wall polysaccharides. Has beta-xylosidase activity via its capacity to hydrolyze glycosidic linkages of beta-1,4-xylo-oligosaccharides of various lengths (X2 to X6), releasing xylose monomers. To a much lesser extent, also has alpha-L-arabinofuranosidase activity. Does not possess beta-D-glucosidase activity. Acts synergistically with Xyn10D-Fae1A to increase the release of xylose from xylan. The protein is Xylan 1,4-beta-xylosidase of Xylanibacter ruminicola (strain ATCC 19189 / DSM 19721 / CIP 105475 / JCM 8958 / 23) (Prevotella ruminicola).